The following is a 186-amino-acid chain: MGTPNDQAVLQAIFNPDTPFGDVVGLDLEEAEEGDEDGVFPQAQLEHSKALELQGVRAAEAGDLHTALEKFGQAISLLPDRASAYNNRAQARRLQGDVAGALEDLERAVTLSGGRGRAARQSFVQSGLLARFQGRDDDARRDFEKAARLGSPFARRQLVLLNPYAALCNRMLADMMGQLRAPSNGR.

TPR repeat units follow at residues 48–81, 83–115, and 120–153; these read SKAL…LPDR, SAYN…SGGR, and RQSF…GSPF.

It belongs to the TTC36 family.

This is Tetratricopeptide repeat protein 36 (Ttc36) from Mus musculus (Mouse).